A 224-amino-acid chain; its full sequence is CRP-like cAMP-activated global transcriptional regulator (224 aa).

3',5'-cyclic AMP-binding positions include 64-70 (GRENLLT), 79-82 (GELS), 89-90 (RT), 134-135 (TN), 142-143 (IF), and 178-188 (EEIAQLVGASR). Residues 144–217 (TDVPGRVAKQ…GKSVLISDSE (74 aa)) enclose the HTH crp-type domain. The H-T-H motif DNA-binding region spans 177–196 (QEEIAQLVGASRETVNKALA).

Homodimer.

Functionally, global transcriptional regulator that complexes with cAMP and binds to specific DNA promoter sites, causing DNA-bending, to regulate transcription. cAMP improves binding to specific DNA sequences, probably by altering protein conformation. Activates expression of whiB1. In Mycobacterium tuberculosis (strain CDC 1551 / Oshkosh), this protein is CRP-like cAMP-activated global transcriptional regulator.